A 46-amino-acid chain; its full sequence is U-myrmeciitoxin(01)-Mg6a (46 aa).

The first 20 residues, 1–20, serve as a signal peptide directing secretion; that stretch reads MNLKTFCFFLLGIFVTLTVT. Residues 21 to 33 constitute a propeptide that is removed on maturation; the sequence is VIPIANADAEADT.

In terms of processing, contains 1 disulfide bond. As to expression, expressed by the venom gland.

Its subcellular location is the secreted. This is U-myrmeciitoxin(01)-Mg6a from Myrmecia gulosa (Red bulldog ant).